Reading from the N-terminus, the 198-residue chain is Recombination protein RecR (198 aa).

A C4-type zinc finger spans residues 57–72 (CSICGNLTDEDPCAIC). Residues 80 to 175 (STILIVEDSR…KVTRLARGLA (96 aa)) enclose the Toprim domain.

The protein belongs to the RecR family.

Its function is as follows. May play a role in DNA repair. It seems to be involved in an RecBC-independent recombinational process of DNA repair. It may act with RecF and RecO. This Streptococcus gordonii (strain Challis / ATCC 35105 / BCRC 15272 / CH1 / DL1 / V288) protein is Recombination protein RecR.